The primary structure comprises 316 residues: Acetaldehyde dehydrogenase (316 aa).

Ser-13–Ile-16 lines the NAD(+) pocket. Cys-131 serves as the catalytic Acyl-thioester intermediate. Residues Ser-162–Asn-170 and Asn-290 each bind NAD(+).

It belongs to the acetaldehyde dehydrogenase family.

It carries out the reaction acetaldehyde + NAD(+) + CoA = acetyl-CoA + NADH + H(+). Catalyzes the conversion of acetaldehyde to acetyl-CoA, using NAD(+) and coenzyme A. Is the final enzyme in the meta-cleavage pathway for the degradation of 2-aminophenol. This Pseudomonas sp protein is Acetaldehyde dehydrogenase (amnH).